A 376-amino-acid polypeptide reads, in one-letter code: C-type lectin domain family 4 member M (376 aa).

Residues 1 to 49 (MSDSKEPRVQQLGLLEEDPTTSGIRLFPRDFQFQQIHGHKSSTGCLGHG) lie on the Cytoplasmic side of the membrane. Positions 14 to 15 (LL) match the Endocytosis signal motif. Residues 50–70 (ALVLQLLSFTLLAGVLVAILV) traverse the membrane as a helical; Signal-anchor for type II membrane protein segment. Residues 71–376 (QVSKVPSSLS…KKPTVCFRDE (306 aa)) are Extracellular-facing. The N-linked (GlcNAc...) asparagine glycan is linked to asparagine 92. Tandem repeats lie at residues 108–130 (KLQEIYQELTQLKAAVGELPEKS), 131–153 (KLQEIYQELTQLKAAVGELPEKS), 154–176 (KLQEIYQELTQLKAAVGELPEKS), 177–199 (KLQEIYQELTRLKAAVGELPEKS), 200–222 (KLQEIYQELTQLKAALGKLPDQS), and 223–245 (KQQQIYQELTDLKTAFERLCRHC). Residues 108–246 (KLQEIYQELT…AFERLCRHCP (139 aa)) are 6 X approximate tandem repeats. Cystine bridges form between cysteine 242–cysteine 372, cysteine 245–cysteine 256, cysteine 273–cysteine 366, and cysteine 345–cysteine 358. The region spanning 251–367 (FFQGNCYFMS…CDVDNYWICK (117 aa)) is the C-type lectin domain. Glutamate 336, asparagine 338, serine 340, glutamate 343, asparagine 354, and aspartate 355 together coordinate Ca(2+). A glycan (N-linked (GlcNAc...) asparagine) is linked at asparagine 338.

Homotetramer.

The protein resides in the membrane. In terms of biological role, probable pathogen-recognition receptor involved in peripheral immune surveillance in liver. May mediate the endocytosis of pathogens which are subsequently degraded in lysosomal compartments. Probably recognizes in a calcium-dependent manner high mannose N-linked oligosaccharides in a variety of pathogen antigens. Is a receptor for ICAM3, probably by binding to mannose-like carbohydrates. The chain is C-type lectin domain family 4 member M (CLEC4M) from Gorilla gorilla gorilla (Western lowland gorilla).